The sequence spans 423 residues: Inactive autotransporter heptosyltransferase BimC (423 aa).

Positions 1–10 (MPKVTFSGSA) are enriched in polar residues. The interval 1–49 (MPKVTFSGSAPTLGVHAPPALDPRQPASPPPAASNGTHARGFSPPADMP) is disordered. Residues C371, C374, C390, and C402 each coordinate Fe(3+).

This sequence belongs to the glycosyltransferase 9 family. Homotrimer or homotetramer. Fe(3+) is required as a cofactor.

It localises to the cell inner membrane. It is found in the cytoplasm. Its function is as follows. Iron-binding protein which is required for the asymmetric polar distribution of the autotransporter BimA on the bacterial surface prior to its translocation into bacterial periplasm. Lacks heptosyltransferase activity. This chain is Inactive autotransporter heptosyltransferase BimC, found in Burkholderia thailandensis (strain ATCC 700388 / DSM 13276 / CCUG 48851 / CIP 106301 / E264).